The following is a 355-amino-acid chain: UDP-N-acetylglucosamine--N-acetylmuramyl-(pentapeptide) pyrophosphoryl-undecaprenol N-acetylglucosamine transferase (355 aa).

UDP-N-acetyl-alpha-D-glucosamine-binding positions include 7–9, Asn-119, Arg-159, Ser-187, Ile-241, and Gln-286; that span reads TGG.

This sequence belongs to the glycosyltransferase 28 family. MurG subfamily.

Its subcellular location is the cell inner membrane. It catalyses the reaction di-trans,octa-cis-undecaprenyl diphospho-N-acetyl-alpha-D-muramoyl-L-alanyl-D-glutamyl-meso-2,6-diaminopimeloyl-D-alanyl-D-alanine + UDP-N-acetyl-alpha-D-glucosamine = di-trans,octa-cis-undecaprenyl diphospho-[N-acetyl-alpha-D-glucosaminyl-(1-&gt;4)]-N-acetyl-alpha-D-muramoyl-L-alanyl-D-glutamyl-meso-2,6-diaminopimeloyl-D-alanyl-D-alanine + UDP + H(+). It participates in cell wall biogenesis; peptidoglycan biosynthesis. Its function is as follows. Cell wall formation. Catalyzes the transfer of a GlcNAc subunit on undecaprenyl-pyrophosphoryl-MurNAc-pentapeptide (lipid intermediate I) to form undecaprenyl-pyrophosphoryl-MurNAc-(pentapeptide)GlcNAc (lipid intermediate II). The sequence is that of UDP-N-acetylglucosamine--N-acetylmuramyl-(pentapeptide) pyrophosphoryl-undecaprenol N-acetylglucosamine transferase from Nitrosomonas eutropha (strain DSM 101675 / C91 / Nm57).